Consider the following 61-residue polypeptide: UPF0434 protein Sama_1339 (61 aa).

This sequence belongs to the UPF0434 family.

The sequence is that of UPF0434 protein Sama_1339 from Shewanella amazonensis (strain ATCC BAA-1098 / SB2B).